Consider the following 321-residue polypeptide: MDVRALPWLPWLLWLLCRGGGDADSRAPFTPTWPRSREREAAAFRESLNRHRYLNSLFPSENSTAFYGINQFSYLFPEEFKAIYLRSKPSKFPRYSAEVHMSIPNVSLPLRFDWRDKQVVTQVRNQQMCGGCWAFSVVGAVESAYAIKGKPLEDLSVQQVIDCSYNNYGCNGGSTLNALNWLNKMQVKLVKDSEYPFKAQNGLCHYFSGSHSGFSIKGYSAYDFSDQEDEMAKALLTFGPLVVIVDAVSWQDYLGGIIQHHCSSGEANHAVLITGFDKTGSTPYWIVRNSWGSSWGVDGYAHVKMGSNVCGIADSVSSIFV.

The first 23 residues, 1 to 23 (MDVRALPWLPWLLWLLCRGGGDA), serve as a signal peptide directing secretion. The propeptide at 24–107 (DSRAPFTPTW…EVHMSIPNVS (84 aa)) is activation peptide. Residues Asn-62 and Asn-105 are each glycosylated (N-linked (GlcNAc...) asparagine). Cystine bridges form between Cys-129-Cys-170, Cys-163-Cys-204, and Cys-262-Cys-310. The active site involves Cys-132. Catalysis depends on residues His-269 and Asn-289.

Belongs to the peptidase C1 family. As to expression, expressed in all tissues examined. High levels seen in the ovary, kidney and placenta while low levels seen in thymus and skeletal muscle.

It localises to the lysosome. It catalyses the reaction The recombinant human enzyme hydrolyzes synthetic endopeptidase substrates including Z-Phe-Arg-NHMec and Z-Arg-Arg-NHMec.. Its function is as follows. Proteolytic enzyme possibly involved in normal cellular protein degradation and turnover. The protein is Cathepsin O (CTSO) of Homo sapiens (Human).